Here is a 195-residue protein sequence, read N- to C-terminus: Ribonuclease HII (195 aa).

The region spanning 6–195 (SLIAGVDEVG…KSFISRLEIN (190 aa)) is the RNase H type-2 domain. 3 residues coordinate a divalent metal cation: Asp12, Glu13, and Asp108.

It belongs to the RNase HII family. Requires Mn(2+) as cofactor. Mg(2+) is required as a cofactor.

The protein resides in the cytoplasm. The enzyme catalyses Endonucleolytic cleavage to 5'-phosphomonoester.. In terms of biological role, endonuclease that specifically degrades the RNA of RNA-DNA hybrids. This chain is Ribonuclease HII, found in Prochlorococcus marinus (strain NATL1A).